The following is a 396-amino-acid chain: Polygalacturonase (396 aa).

The first 22 residues, 1 to 22 (MDLKFKVHFALVLLFLAHFGES), serve as a signal peptide directing secretion. Residues Asn143, Asn151, Asn174, Asn181, Asn203, and Asn208 are each glycosylated (N-linked (GlcNAc...) asparagine). PbH1 repeat units lie at residues 172–198 (CKNL…HVSR) and 199–220 (SSSV…SVGD). The active-site Proton donor is the Asp213. The cysteines at positions 215 and 232 are disulfide-linked. The active site involves His236. 3 PbH1 repeats span residues 252-273 (VVGV…RIKT), 282-303 (VNDV…VIDQ), and 316-356 (PSQV…EVGD). N-linked (GlcNAc...) asparagine glycosylation is found at Asn259 and Asn294. The segment at 364–396 (KEGPAKSSCENIKPSLKGKQNPPVCTASAASSS) is disordered. Cysteines 372 and 388 form a disulfide.

Belongs to the glycosyl hydrolase 28 family. In terms of tissue distribution, pollen.

Its subcellular location is the secreted. The protein localises to the cell wall. The catalysed reaction is (1,4-alpha-D-galacturonosyl)n+m + H2O = (1,4-alpha-D-galacturonosyl)n + (1,4-alpha-D-galacturonosyl)m.. Functionally, may function in depolymerizing pectin during pollen development, germination, and tube growth. In Nicotiana tabacum (Common tobacco), this protein is Polygalacturonase (PG1).